The chain runs to 104 residues: Pterin-4-alpha-carbinolamine dehydratase (104 aa).

N-acetylalanine is present on alanine 2. Substrate is bound by residues 61–63 (DHH) and 78–81 (STHD).

It belongs to the pterin-4-alpha-carbinolamine dehydratase family. Homotetramer and homodimer.

It is found in the cytoplasm. The protein resides in the nucleus. The enzyme catalyses (4aS,6R)-4a-hydroxy-L-erythro-5,6,7,8-tetrahydrobiopterin = (6R)-L-erythro-6,7-dihydrobiopterin + H2O. Involved in tetrahydrobiopterin biosynthesis. Seems to both prevent the formation of 7-pterins and accelerate the formation of quinonoid-BH2. Coactivator for HNF1A-dependent transcription. Regulates the dimerization of homeodomain protein HNF1A and enhances its transcriptional activity. Also acts as a coactivator for HNF1B-dependent transcription. The chain is Pterin-4-alpha-carbinolamine dehydratase (pcbd) from Xenopus laevis (African clawed frog).